Consider the following 319-residue polypeptide: Thioredoxin reductase (319 aa).

FAD-binding positions include 11 to 14 (SGPA), 40 to 41 (VA), glutamine 45, asparagine 54, valine 87, cysteine 145, aspartate 288, and 295 to 297 (RQA). Cysteine 142 and cysteine 145 are oxidised to a cystine.

The protein belongs to the class-II pyridine nucleotide-disulfide oxidoreductase family. As to quaternary structure, homodimer. FAD is required as a cofactor.

The protein localises to the cytoplasm. It catalyses the reaction [thioredoxin]-dithiol + NADP(+) = [thioredoxin]-disulfide + NADPH + H(+). The protein is Thioredoxin reductase (TRR1) of Eremothecium gossypii (strain ATCC 10895 / CBS 109.51 / FGSC 9923 / NRRL Y-1056) (Yeast).